Here is a 215-residue protein sequence, read N- to C-terminus: MPGEATETVPATEQELPQPQAETGSGTESDSDESVPELEGQDSTQATTQQAQLAAAAEIDEEPVSKAKQSRSEKKARKAMSKLGLRQVTGVTRVTIRKSKNILFVITKPDVYKSPASDTYIVFGEAKIEDLSQQAQLAAAEKFKVQGEAVSNIQENTQTPTVQEESEEEEVDETGVEVKDIEWVMSQANVSRAKAVRALKNNSNNIVNAIMELTM.

The interval M1–S81 is disordered. A compositionally biased stretch (polar residues) spans V9–E28. Acidic residues predominate over residues S29 to G40. Phosphoserine; by ILK1 is present on S43. Low complexity predominate over residues T44–A57. Positions Q69–M80 are required for DNA-binding. The 66-residue stretch at S70–A135 folds into the NAC-A/B domain. The RNA/DNA-binding stretch occupies residues R93 to K108. At S132 the chain carries Phosphoserine. K142 carries the N6-acetyllysine; alternate modification. K142 participates in a covalent cross-link: Glycyl lysine isopeptide (Lys-Gly) (interchain with G-Cter in SUMO2); alternate. Residue T159 is modified to Phosphothreonine; by GSK3-beta. A Phosphothreonine modification is found at T161. Residues S166, S186, S191, and S203 each carry the phosphoserine modification. A UBA domain is found at V176–L213.

The protein belongs to the NAC-alpha family. In terms of assembly, part of the nascent polypeptide-associated complex (NAC), which is a heterodimer of NACA and BTF3 (via NAC-A/B domains). NAC associates with ribosomes through the BTF3/NACB subunit and contacts the ribosomal protein L23, which is positioned near the exiting site. Both subunits can contact nascent polypeptide chains. NACA may also form homodimers, and only this form binds DNA. Interacts with TBP and JUN. In terms of processing, phosphorylation of Ser-43 by ILK during cell adhesion may promote nuclear localization. Phosphorylation of Thr-159 by GSK3B may promote proteasome mediated degradation.

The protein localises to the cytoplasm. The protein resides in the nucleus. In terms of biological role, prevents inappropriate targeting of non-secretory polypeptides to the endoplasmic reticulum (ER). Binds to nascent polypeptide chains as they emerge from the ribosome and blocks their interaction with the signal recognition particle (SRP), which normally targets nascent secretory peptides to the ER. Also reduces the inherent affinity of ribosomes for protein translocation sites in the ER membrane (M sites). May act as a specific coactivator for JUN, binding to DNA and stabilizing the interaction of JUN homodimers with target gene promoters. The chain is Nascent polypeptide-associated complex subunit alpha from Chinchilla lanigera (Long-tailed chinchilla).